The sequence spans 1207 residues: AP-3 complex subunit delta-1 (1207 aa).

Position 2 is an N-acetylalanine (Ala-2). HEAT repeat units lie at residues Lys-34–Asp-71, Asp-142–Glu-179, Ser-180–Lys-216, Tyr-218–Arg-254, Lys-257–Asn-296, Ser-298–Lys-336, Ser-337–Leu-373, Glu-375–Tyr-409, and Val-521–Pro-558. 2 disordered regions span residues Pro-630 to Asp-695 and Arg-731 to Leu-970. A phosphoserine mark is found at Ser-632, Ser-634, and Ser-636. A compositionally biased stretch (basic and acidic residues) spans Glu-648–Glu-675. Positions Glu-659–Asn-679 form a coiled coil. Ser-688 carries the phosphoserine modification. A coiled-coil region spans residues Val-725–Arg-752. A compositionally biased stretch (basic and acidic residues) spans Arg-731–Asp-740. The segment covering Lys-741–Ser-759 has biased composition (basic residues). Residues Ser-758 and Ser-759 each carry the phosphoserine modification. At Thr-762 the chain carries Phosphothreonine. A phosphoserine mark is found at Ser-764, Ser-788, and Ser-829. A compositionally biased stretch (acidic residues) spans Val-777–Asp-794. The segment covering Pro-795–Lys-840 has biased composition (basic and acidic residues). The segment covering Lys-841 to Glu-854 has biased composition (basic residues). Residues Lys-846–Leu-870 are a coiled coil. Composition is skewed to basic and acidic residues over residues Lys-855–Asp-869 and Glu-899–Glu-908. Residues Pro-923–Lys-933 are compositionally biased toward basic residues. The segment covering Ala-952 to Pro-969 has biased composition (acidic residues).

The protein belongs to the adaptor complexes large subunit family. AP-3 associates with the BLOC-1 complex. Adaptor protein complex 3 (AP-3) is a heterotetramer composed of two large adaptins (delta-type subunit AP3D1 and beta-type subunit AP3B1 or AP3B2), a medium adaptin (mu-type subunit AP3M1 or AP3M2) and a small adaptin (sigma-type subunit APS1 or AP3S2). Interacts with SLC30A2. Interacts with CLN3 (via dileucine motif); this interaction facilitates lysosomal targeting.

It is found in the cytoplasm. It localises to the golgi apparatus membrane. Functionally, part of the AP-3 complex, an adaptor-related complex which is not clathrin-associated. The complex is associated with the Golgi region as well as more peripheral structures. It facilitates the budding of vesicles from the Golgi membrane and may be directly involved in trafficking to lysosomes. Involved in process of CD8+ T-cell and NK cell degranulation. In concert with the BLOC-1 complex, AP-3 is required to target cargos into vesicles assembled at cell bodies for delivery into neurites and nerve terminals. The chain is AP-3 complex subunit delta-1 (AP3D1) from Bos taurus (Bovine).